The primary structure comprises 399 residues: Unsaturated chondroitin disaccharide hydrolase (399 aa).

The active-site Nucleophile is the Asp116. Residues Asp116, Asp176, Gly234, Thr236, Arg248, Trp252, Ser366, and Ser369 each contribute to the substrate site. The Proton donor role is filled by Asp176.

It belongs to the glycosyl hydrolase 88 family. In terms of assembly, monomer.

It catalyses the reaction beta-D-4-deoxy-Delta(4)-GlcpA-(1-&gt;3)-beta-D-GalpNAc6S + H2O = N-acetyl-beta-D-galactosamine 6-sulfate + 5-dehydro-4-deoxy-D-glucuronate. Functionally, catalyzes the hydrolysis of unsaturated hyaluronate and chondroitin disaccharides. Also degrades unsaturated heparin disaccharides. Releases 4-deoxy-4,5-didehydro D-glucuronic acid or 4-deoxy-4,5-didehydro L-iduronic acid from chondroitin disaccharides, hyaluronan disaccharides and heparin disaccharides and cleaves both glycosidic (1-&gt;3) and (1-&gt;4) bonds. Prefers sulfated glycosaminoglycans compared to unsulfated glycosaminoglycans. Probably required for mammalian cells invasion through the degradation of extracellular sulfated glycosaminoglycans such as chondroitin and hyaluronan. This Streptococcus pyogenes serotype M1 protein is Unsaturated chondroitin disaccharide hydrolase (ugl).